We begin with the raw amino-acid sequence, 693 residues long: Polyribonucleotide nucleotidyltransferase (693 aa).

Positions 485 and 491 each coordinate Mg(2+). Residues 552–611 form the KH domain; sequence PRIETMQINTSKIATVIGPGGKQIRQIIERSGAQVDINDNGLINISANTQESIDKAKELI. The 69-residue stretch at 621 to 689 folds into the S1 motif domain; sequence GKIYNGRVTS…EKGQLKLSHK (69 aa).

This sequence belongs to the polyribonucleotide nucleotidyltransferase family. Mg(2+) serves as cofactor.

The protein resides in the cytoplasm. It carries out the reaction RNA(n+1) + phosphate = RNA(n) + a ribonucleoside 5'-diphosphate. Functionally, involved in mRNA degradation. Catalyzes the phosphorolysis of single-stranded polyribonucleotides processively in the 3'- to 5'-direction. In Chlamydia muridarum (strain MoPn / Nigg), this protein is Polyribonucleotide nucleotidyltransferase.